A 176-amino-acid polypeptide reads, in one-letter code: Adenine phosphoribosyltransferase (176 aa).

This sequence belongs to the purine/pyrimidine phosphoribosyltransferase family. Homodimer.

The protein resides in the cytoplasm. The catalysed reaction is AMP + diphosphate = 5-phospho-alpha-D-ribose 1-diphosphate + adenine. Its pathway is purine metabolism; AMP biosynthesis via salvage pathway; AMP from adenine: step 1/1. In terms of biological role, catalyzes a salvage reaction resulting in the formation of AMP, that is energically less costly than de novo synthesis. The chain is Adenine phosphoribosyltransferase from Leuconostoc mesenteroides subsp. mesenteroides (strain ATCC 8293 / DSM 20343 / BCRC 11652 / CCM 1803 / JCM 6124 / NCDO 523 / NBRC 100496 / NCIMB 8023 / NCTC 12954 / NRRL B-1118 / 37Y).